Reading from the N-terminus, the 184-residue chain is ATP synthase subunit b, chloroplastic (184 aa).

Residues 27 to 49 (LATNLINLSVVFGVLIFFGKGVL) traverse the membrane as a helical segment.

It belongs to the ATPase B chain family. In terms of assembly, F-type ATPases have 2 components, F(1) - the catalytic core - and F(0) - the membrane proton channel. F(1) has five subunits: alpha(3), beta(3), gamma(1), delta(1), epsilon(1). F(0) has four main subunits: a(1), b(1), b'(1) and c(10-14). The alpha and beta chains form an alternating ring which encloses part of the gamma chain. F(1) is attached to F(0) by a central stalk formed by the gamma and epsilon chains, while a peripheral stalk is formed by the delta, b and b' chains.

The protein resides in the plastid. It localises to the chloroplast thylakoid membrane. Functionally, f(1)F(0) ATP synthase produces ATP from ADP in the presence of a proton or sodium gradient. F-type ATPases consist of two structural domains, F(1) containing the extramembraneous catalytic core and F(0) containing the membrane proton channel, linked together by a central stalk and a peripheral stalk. During catalysis, ATP synthesis in the catalytic domain of F(1) is coupled via a rotary mechanism of the central stalk subunits to proton translocation. In terms of biological role, component of the F(0) channel, it forms part of the peripheral stalk, linking F(1) to F(0). This Aethionema cordifolium (Lebanon stonecress) protein is ATP synthase subunit b, chloroplastic.